Consider the following 181-residue polypeptide: MVTPRRDSGKDRPSLKDARILVVEARYYEDIADELLRGATAAIAAAQAEAEVVTVPGALEIPQAVAILVEAAAREARPYDAVVALGCVIRGETGHYDIVAGESARALMDLSVLLRLPLGNGILTVETEAQAQARARVSEMNKGGGAAEAALAVLALKRAKAAERPDRTIGFTPRRTAETQE.

Residues Tyr27, 58–60, and 87–89 each bind 5-amino-6-(D-ribitylamino)uracil; these read ALE and CVI. 92–93 serves as a coordination point for (2S)-2-hydroxy-3-oxobutyl phosphate; that stretch reads ET. His95 serves as the catalytic Proton donor. Asn120 is a binding site for 5-amino-6-(D-ribitylamino)uracil. Arg134 is a (2S)-2-hydroxy-3-oxobutyl phosphate binding site.

This sequence belongs to the DMRL synthase family.

The catalysed reaction is (2S)-2-hydroxy-3-oxobutyl phosphate + 5-amino-6-(D-ribitylamino)uracil = 6,7-dimethyl-8-(1-D-ribityl)lumazine + phosphate + 2 H2O + H(+). Its pathway is cofactor biosynthesis; riboflavin biosynthesis; riboflavin from 2-hydroxy-3-oxobutyl phosphate and 5-amino-6-(D-ribitylamino)uracil: step 1/2. Catalyzes the formation of 6,7-dimethyl-8-ribityllumazine by condensation of 5-amino-6-(D-ribitylamino)uracil with 3,4-dihydroxy-2-butanone 4-phosphate. This is the penultimate step in the biosynthesis of riboflavin. This Methylobacterium sp. (strain 4-46) protein is 6,7-dimethyl-8-ribityllumazine synthase.